The primary structure comprises 274 residues: Acetyl-coenzyme A carboxylase carboxyl transferase subunit alpha (274 aa).

The CoA carboxyltransferase C-terminal domain occupies Asn-2–Glu-250.

It belongs to the AccA family. Acetyl-CoA carboxylase is a heterohexamer composed of biotin carboxyl carrier protein (AccB), biotin carboxylase (AccC) and two subunits each of ACCase subunit alpha (AccA) and ACCase subunit beta (AccD).

It is found in the cytoplasm. It carries out the reaction N(6)-carboxybiotinyl-L-lysyl-[protein] + acetyl-CoA = N(6)-biotinyl-L-lysyl-[protein] + malonyl-CoA. It participates in lipid metabolism; malonyl-CoA biosynthesis; malonyl-CoA from acetyl-CoA: step 1/1. Functionally, component of the acetyl coenzyme A carboxylase (ACC) complex. First, biotin carboxylase catalyzes the carboxylation of biotin on its carrier protein (BCCP) and then the CO(2) group is transferred by the carboxyltransferase to acetyl-CoA to form malonyl-CoA. The protein is Acetyl-coenzyme A carboxylase carboxyl transferase subunit alpha of Clostridium botulinum (strain Eklund 17B / Type B).